Consider the following 173-residue polypeptide: Small ribosomal subunit protein uS13 (173 aa).

Residues 130–143 (GVRHKRGQKVRGQR) are compositionally biased toward basic residues. Residues 130-155 (GVRHKRGQKVRGQRTKSTGRTEGTIG) are disordered.

It belongs to the universal ribosomal protein uS13 family. Part of the 30S ribosomal subunit. Forms a loose heterodimer with protein S19. Forms two bridges to the 50S subunit in the 70S ribosome.

Located at the top of the head of the 30S subunit, it contacts several helices of the 16S rRNA. In the 70S ribosome it contacts the 23S rRNA (bridge B1a) and protein L5 of the 50S subunit (bridge B1b), connecting the 2 subunits; these bridges are implicated in subunit movement. This is Small ribosomal subunit protein uS13 from Haloquadratum walsbyi (strain DSM 16790 / HBSQ001).